The sequence spans 196 residues: Agamous-like MADS-box protein AGL27 (196 aa).

Residues Met1–Asp61 form the MADS-box domain. One can recognise a K-box domain in the interval Ala80–Leu170. The disordered stretch occupies residues Glu175–Asn196.

In terms of assembly, interacts with AGL39, AGL97 and AGL74. Expressed in most plant tissues, embryo, seedlings, roots, leaves, stems, inflorescence, pollen, siliques and flowers.

It localises to the nucleus. Its function is as follows. Probable transcription factor involved in the negative regulation of flowering time in both long and short days, probably through the photoperiodic and vernalization pathways. Prevents premature flowering. The sequence is that of Agamous-like MADS-box protein AGL27 (AGL27) from Arabidopsis thaliana (Mouse-ear cress).